The chain runs to 76 residues: Acyl carrier protein (76 aa).

The Carrier domain maps to 1-76 (MSIEERVKKI…SAIDYVQNNQ (76 aa)). At S36 the chain carries O-(pantetheine 4'-phosphoryl)serine.

This sequence belongs to the acyl carrier protein (ACP) family. Post-translationally, 4'-phosphopantetheine is transferred from CoA to a specific serine of apo-ACP by AcpS. This modification is essential for activity because fatty acids are bound in thioester linkage to the sulfhydryl of the prosthetic group.

The protein localises to the cytoplasm. The protein operates within lipid metabolism; fatty acid biosynthesis. Functionally, carrier of the growing fatty acid chain in fatty acid biosynthesis. This is Acyl carrier protein from Haemophilus influenzae (strain 86-028NP).